Consider the following 365-residue polypeptide: Membrane cofactor protein (365 aa).

The N-terminal stretch at 1–44 is a signal peptide; the sequence is MTAAPLMPDSTHPCRRRKSYTFFWCSLGVYAEALLFLLSHLSDA. Sushi domains follow at residues 45–106, 107–170, 171–236, and 237–296; these read CELP…GCIK, VQCT…HCEK, IYCL…ECKV, and VKCP…KCLK. Residues 45–329 lie on the Extracellular side of the membrane; the sequence is CELPRPFEAM…GIFSQELDAW (285 aa). 6 disulfides stabilise this stretch: cysteine 109/cysteine 151, cysteine 137/cysteine 168, cysteine 173/cysteine 221, cysteine 202/cysteine 234, cysteine 239/cysteine 281, and cysteine 267/cysteine 294. N-linked (GlcNAc...) asparagine glycosylation occurs at asparagine 181. An O-linked (GalNAc...) threonine glycan is attached at threonine 205. O-linked (GalNAc...) threonine glycans are attached at residues threonine 301 and threonine 304. N-linked (GlcNAc...) asparagine glycosylation occurs at asparagine 310. An O-linked (GalNAc...) threonine glycan is attached at threonine 312. Residues 330-350 traverse the membrane as a helical segment; it reads IIALIVITSIVGVFILCLIVL. The Cytoplasmic segment spans residues 351–365; sequence RCFEHRKKTNVSAAR.

As to quaternary structure, interacts with C3b. Interacts with C4b. Interacts with moesin/MSN. Post-translationally, may be O-glycosylated. In terms of processing, N-glycosylated. As to expression, present only in testis (at protein level).

It localises to the cytoplasmic vesicle. Its subcellular location is the secretory vesicle. The protein resides in the acrosome inner membrane. It is found in the secreted. Its function is as follows. May be involved in the fusion of the spermatozoa with the oocyte during fertilization. The sequence is that of Membrane cofactor protein (Cd46) from Mus musculus (Mouse).